We begin with the raw amino-acid sequence, 455 residues long: Post-transcriptional regulator MTA (455 aa).

A disordered region spans residues 17–163 (DSVSSSEFDE…QVNCQRQDDD (147 aa)). Residues 23-42 (EFDESRDDETDAPTLEDEQL) are compositionally biased toward acidic residues. Over residues 88-98 (SPLSRPRSPSP) the composition is skewed to low complexity. 3 short sequence motifs (nuclear localization signal) span residues 101–107 (RYGKKIK), 121–130 (KRPRRRPRDR), and 143–152 (RAAPKRATRR). 4 residues coordinate Zn(2+): cysteine 333, histidine 423, cysteine 427, and cysteine 432. Residues 333 to 432 (CVFDKQSELA…HHSLCRNSEC (100 aa)) form a CHC2-type zinc finger.

It belongs to the HHV-1 ICP27 protein family. In terms of assembly, homodimer. Homodimerization is required for transactivation. Interacts with host ALYREF. Associates in a complex with RNA, and host export factors NXF1/TAP and ALYREF; these interactions allow nuclear export of viral transcripts. Interacts with protein K-bZIP/K8; this interaction promotes viral gene expression during lytic infection. Interacts with host PABPC1. Interacts with host AGO2 and TNRC6A; these interactions inhibit host P-body formation. Interacts with PRKRA and EIF2AK2/PKR; these interactions inhibit host stress granule formation. Proteolytically cleaved by host caspase-7 (CASP7), leading to its inactivation, thereby preventing expression of viral lytic genes.

It localises to the host cytoplasm. It is found in the host nucleus. Its function is as follows. Post-transcriptional regulator that plays an essential role in the expression of viral lytic genes and productive viral replication. Possesses numerous activities that promote the expression of viral genes including enhancement of RNA stability, promotion of RNA splicing and stimulation of protein translation often via its ability to interact with different cellular cofactors. Stabilizes polyadenylated nuclear (PAN) RNA by cooperative binding to a 9-nt core of the MRE (MTA responsive element) together with host PABPC1. Functions as a viral splicing factor and promotes expression of intron-containing viral lytic genes. Protects viral transcripts from specific nuclear RNA decay pathways by preventing host MTREX recruitment that promotes unwinding and degradation of structured RNA substrates. Plays a role in the inhibition of host P-body formation by altering the scaffolding activity of TNRC6A at the initial stage thereby enhancing virus production. Also inhibits host stress granule formation by blocking autophosphorylation of EIF2AK2/PKR and its subsequent binding to dsRNA. The protein is Post-transcriptional regulator MTA of Human herpesvirus 8 type P (isolate GK18) (HHV-8).